Here is a 123-residue protein sequence, read N- to C-terminus: Small ribosomal subunit protein uS12 (123 aa).

The residue at position 89 (aspartate 89) is a 3-methylthioaspartic acid. The interval 100 to 123 (GSLDTSGVKGRNQGRSKYGTKRPK) is disordered. The span at 111–123 (NQGRSKYGTKRPK) shows a compositional bias: basic residues.

The protein belongs to the universal ribosomal protein uS12 family. Part of the 30S ribosomal subunit. Contacts proteins S8 and S17. May interact with IF1 in the 30S initiation complex.

In terms of biological role, with S4 and S5 plays an important role in translational accuracy. Functionally, interacts with and stabilizes bases of the 16S rRNA that are involved in tRNA selection in the A site and with the mRNA backbone. Located at the interface of the 30S and 50S subunits, it traverses the body of the 30S subunit contacting proteins on the other side and probably holding the rRNA structure together. The combined cluster of proteins S8, S12 and S17 appears to hold together the shoulder and platform of the 30S subunit. This is Small ribosomal subunit protein uS12 from Pseudomonas fluorescens (strain ATCC BAA-477 / NRRL B-23932 / Pf-5).